A 469-amino-acid polypeptide reads, in one-letter code: uncharacterized protein (469 aa).

This is an uncharacterized protein from Treponema pallidum (strain Nichols).